We begin with the raw amino-acid sequence, 65 residues long: DNA gyrase inhibitor YacG (65 aa).

Residues cysteine 9, cysteine 12, cysteine 28, and cysteine 32 each coordinate Zn(2+). Residues 44–65 form a disordered region; sequence EKRIPSSSDLSESDDWSEEPKQ. Residues 54-65 show a composition bias toward acidic residues; that stretch reads SESDDWSEEPKQ.

It belongs to the DNA gyrase inhibitor YacG family. In terms of assembly, interacts with GyrB. Requires Zn(2+) as cofactor.

In terms of biological role, inhibits all the catalytic activities of DNA gyrase by preventing its interaction with DNA. Acts by binding directly to the C-terminal domain of GyrB, which probably disrupts DNA binding by the gyrase. This chain is DNA gyrase inhibitor YacG, found in Escherichia coli O6:H1 (strain CFT073 / ATCC 700928 / UPEC).